A 250-amino-acid chain; its full sequence is Pyrroloquinoline-quinone synthase (250 aa).

It belongs to the PqqC family.

It carries out the reaction 6-(2-amino-2-carboxyethyl)-7,8-dioxo-1,2,3,4,7,8-hexahydroquinoline-2,4-dicarboxylate + 3 O2 = pyrroloquinoline quinone + 2 H2O2 + 2 H2O + H(+). It functions in the pathway cofactor biosynthesis; pyrroloquinoline quinone biosynthesis. Its function is as follows. Ring cyclization and eight-electron oxidation of 3a-(2-amino-2-carboxyethyl)-4,5-dioxo-4,5,6,7,8,9-hexahydroquinoline-7,9-dicarboxylic-acid to PQQ. This chain is Pyrroloquinoline-quinone synthase, found in Xanthomonas oryzae pv. oryzae (strain KACC10331 / KXO85).